A 170-amino-acid chain; its full sequence is MGKRYFCDYCDRSFQDNLHNRKKHLNGLQHLKAKKLWYDMFRDAAAILLDEQNKRPCRKFLLTGQCDFGSNCRFSHMSERDLQELSVQVEEERRAREWPLDVAELPEVCLEDWLEKRAKRLSSAPSSRAEPVRATVFQYPVGWPPVQELPPSLRAPPPGGWPLQPSVQWG.

Residues Glu51–Glu79 form a C3H1-type zinc finger. The disordered stretch occupies residues Pro150–Gly170.

As to quaternary structure, component of the U11/U12 snRNPs that are part of the U12-type spliceosome.

The protein localises to the nucleus. This Bos taurus (Bovine) protein is Zinc finger matrin-type protein 5 (ZMAT5).